A 163-amino-acid polypeptide reads, in one-letter code: Phosphopantetheine adenylyltransferase (163 aa).

Residue Ser-9 coordinates substrate. ATP contacts are provided by residues 9–10 (SF) and His-17. Positions 41, 73, and 87 each coordinate substrate. ATP-binding positions include 88–90 (GLR), Glu-98, and 123–129 (YSYLSSS).

Belongs to the bacterial CoaD family. As to quaternary structure, homohexamer. Requires Mg(2+) as cofactor.

It localises to the cytoplasm. The catalysed reaction is (R)-4'-phosphopantetheine + ATP + H(+) = 3'-dephospho-CoA + diphosphate. The protein operates within cofactor biosynthesis; coenzyme A biosynthesis; CoA from (R)-pantothenate: step 4/5. Functionally, reversibly transfers an adenylyl group from ATP to 4'-phosphopantetheine, yielding dephospho-CoA (dPCoA) and pyrophosphate. This chain is Phosphopantetheine adenylyltransferase, found in Lachnoclostridium phytofermentans (strain ATCC 700394 / DSM 18823 / ISDg) (Clostridium phytofermentans).